The primary structure comprises 258 residues: UPF0246 protein ETA_07010 (258 aa).

This sequence belongs to the UPF0246 family.

The chain is UPF0246 protein ETA_07010 from Erwinia tasmaniensis (strain DSM 17950 / CFBP 7177 / CIP 109463 / NCPPB 4357 / Et1/99).